A 259-amino-acid chain; its full sequence is 5'-nucleotidase SurE (259 aa).

Asp8, Asp9, Ser40, and Asn92 together coordinate a divalent metal cation.

The protein belongs to the SurE nucleotidase family. A divalent metal cation is required as a cofactor.

The protein resides in the cytoplasm. The enzyme catalyses a ribonucleoside 5'-phosphate + H2O = a ribonucleoside + phosphate. Functionally, nucleotidase that shows phosphatase activity on nucleoside 5'-monophosphates. This is 5'-nucleotidase SurE from Xanthomonas axonopodis pv. citri (strain 306).